Reading from the N-terminus, the 208-residue chain is ATP-dependent Clp protease proteolytic subunit (208 aa).

The active-site Nucleophile is the S106. The active site involves H131.

Belongs to the peptidase S14 family. In terms of assembly, fourteen ClpP subunits assemble into 2 heptameric rings which stack back to back to give a disk-like structure with a central cavity, resembling the structure of eukaryotic proteasomes.

It localises to the cytoplasm. The enzyme catalyses Hydrolysis of proteins to small peptides in the presence of ATP and magnesium. alpha-casein is the usual test substrate. In the absence of ATP, only oligopeptides shorter than five residues are hydrolyzed (such as succinyl-Leu-Tyr-|-NHMec, and Leu-Tyr-Leu-|-Tyr-Trp, in which cleavage of the -Tyr-|-Leu- and -Tyr-|-Trp bonds also occurs).. Functionally, cleaves peptides in various proteins in a process that requires ATP hydrolysis. Has a chymotrypsin-like activity. Plays a major role in the degradation of misfolded proteins. This is ATP-dependent Clp protease proteolytic subunit from Dinoroseobacter shibae (strain DSM 16493 / NCIMB 14021 / DFL 12).